The chain runs to 802 residues: Putative transcriptional regulator cudA (802 aa).

4 disordered regions span residues 1 to 148 (MNQS…PSAI), 154 to 173 (ISNNSSLNSPSTTSSPNLLL), 381 to 446 (NNIN…NNEN), and 636 to 658 (QPQQQQQNQQQGQQPQQQQQQGQ). The segment covering 25–63 (NNNNNGNNGMMMNQQQMQQHVVPHLHHLQQQQQQPQQQQ) has biased composition (low complexity). Polar residues predominate over residues 69 to 88 (DYSNSPNGTTNGSTMSPNCI). The segment covering 89–128 (NTNNNNNNNNNNNNNSNNNNNNNNNASNNLTSNKSSSTNT) has biased composition (low complexity). Residues 129–142 (PQIGQLQASPANLT) are compositionally biased toward polar residues. A compositionally biased stretch (low complexity) spans 381–445 (NNINNNNNIN…CNNNNNNNNE (65 aa)).

As to expression, expressed in the prestalk cells that constitute the slug tip (pstA cells) and in prespore cells (at protein level). Not expressed in the band of prestalk cells that lies behind the slug tip (pstO cells). Highly expressed in pstO derived papilla cells during culmination.

It localises to the nucleus. Its subcellular location is the nucleoplasm. Its function is as follows. Essential for normal culmination. May function as a transcriptional regulator. This Dictyostelium discoideum (Social amoeba) protein is Putative transcriptional regulator cudA (cudA).